The following is a 396-amino-acid chain: Ribosomal RNA large subunit methyltransferase I (396 aa).

Residues 2–81 (TVSIYLAKGR…EAIDKDFFVR (80 aa)) form the PUA domain.

It belongs to the methyltransferase superfamily. RlmI family.

It is found in the cytoplasm. The enzyme catalyses cytidine(1962) in 23S rRNA + S-adenosyl-L-methionine = 5-methylcytidine(1962) in 23S rRNA + S-adenosyl-L-homocysteine + H(+). Functionally, specifically methylates the cytosine at position 1962 (m5C1962) of 23S rRNA. The chain is Ribosomal RNA large subunit methyltransferase I from Aliivibrio fischeri (strain ATCC 700601 / ES114) (Vibrio fischeri).